Consider the following 485-residue polypeptide: Pup--protein ligase (485 aa).

E33 is a binding site for Mg(2+). R76 provides a ligand contact to ATP. Y78 is a Mg(2+) binding site. D80 acts as the Proton acceptor in catalysis. Residue E86 participates in Mg(2+) binding. ATP-binding residues include T89 and W451.

This sequence belongs to the Pup ligase/Pup deamidase family. Pup-conjugating enzyme subfamily.

The enzyme catalyses ATP + [prokaryotic ubiquitin-like protein]-L-glutamate + [protein]-L-lysine = ADP + phosphate + N(6)-([prokaryotic ubiquitin-like protein]-gamma-L-glutamyl)-[protein]-L-lysine.. The protein operates within protein degradation; proteasomal Pup-dependent pathway. Its pathway is protein modification; protein pupylation. Its function is as follows. Catalyzes the covalent attachment of the prokaryotic ubiquitin-like protein modifier Pup to the proteasomal substrate proteins, thereby targeting them for proteasomal degradation. This tagging system is termed pupylation. The ligation reaction involves the side-chain carboxylate of the C-terminal glutamate of Pup and the side-chain amino group of a substrate lysine. In Bifidobacterium longum subsp. infantis (strain ATCC 15697 / DSM 20088 / JCM 1222 / NCTC 11817 / S12), this protein is Pup--protein ligase.